A 457-amino-acid polypeptide reads, in one-letter code: Argininosuccinate lyase (457 aa).

The protein belongs to the lyase 1 family. Argininosuccinate lyase subfamily.

The protein localises to the cytoplasm. It catalyses the reaction 2-(N(omega)-L-arginino)succinate = fumarate + L-arginine. Its pathway is amino-acid biosynthesis; L-arginine biosynthesis; L-arginine from L-ornithine and carbamoyl phosphate: step 3/3. This Yersinia pseudotuberculosis serotype O:1b (strain IP 31758) protein is Argininosuccinate lyase.